We begin with the raw amino-acid sequence, 843 residues long: Tetratricopeptide repeat protein 7B (843 aa).

One copy of the TPR 1 repeat lies at 97 to 131; sequence QESNLIMAKLNYVEGDYKEALNIYARVGLDDLPLT. Phosphoserine is present on residues serine 160 and serine 202. TPR repeat units lie at residues 219 to 252, 363 to 396, 397 to 430, 479 to 514, 516 to 548, and 549 to 582; these read ETGLQRAHVLYFKNGNLTRGVGRFRELLRAVETR, SVVYDLLTIALGRRGQYEMLSECLERAMKFAFEE, FHLWYQFALSLMAAGKSARAVKVLKECIRLKPDD, TYSLQATDASLRGMQEVLQRKALLAFQRAHSLSPTD, QAAFYLALQLAISRQIPEALGYVRQALQLQGDD, and ANSLHLLALLLSAQKHYHDALNIIDMALSEYPEN. Phosphoserine is present on residues serine 625, serine 629, serine 630, serine 673, serine 677, serine 678, and serine 681. 4 TPR repeats span residues 696–729, 730–763, 765–797, and 798–831; these read AQIWLHAAEVYIGIGKPAEATACTQEAANLFPMS, HNVLYMRGQIAELRGSMDEARRWYEEALAISPTH, KSMQRLALILHQLGRYSLAEKILRDAVQVNSTA, and HEVWNGLGEVLQAQGNDAAATECFLTALELEASS.

In terms of assembly, component of a phosphatidylinositol 4-kinase (PI4K) complex, composed of PI4KA, EFR3 (EFR3A or EFR3B), TTC7 (TTC7A or TTC7B) and HYCC (HYCC1 or HYCC2). Interacts with PI4KA, interaction is direct. Interacts with EFR3 (EFR3A or EFR3B), interaction is direct. Interacts with HYCC (HYCC1 or HYCC2), interaction is direct. Association with the PI4K complex is strongly reduced by TMEM150A.

The protein localises to the cytoplasm. The protein resides in the cytosol. It is found in the cell membrane. In terms of biological role, component of a complex required to localize phosphatidylinositol 4-kinase (PI4K) to the plasma membrane. The complex acts as a regulator of phosphatidylinositol 4-phosphate (PtdIns(4)P) synthesis. In the complex, plays a central role in bridging PI4KA to EFR3B and HYCC1, via direct interactions. This Homo sapiens (Human) protein is Tetratricopeptide repeat protein 7B (TTC7B).